Here is a 279-residue protein sequence, read N- to C-terminus: S-formylglutathione hydrolase (279 aa).

Catalysis depends on charge relay system residues serine 150, aspartate 226, and histidine 258.

This sequence belongs to the esterase D family.

It catalyses the reaction S-formylglutathione + H2O = formate + glutathione + H(+). In terms of biological role, serine hydrolase involved in the detoxification of formaldehyde. Hydrolyzes S-formylglutathione to glutathione and formate. The chain is S-formylglutathione hydrolase (fghA) from Paracoccus denitrificans (strain Pd 1222).